Reading from the N-terminus, the 450-residue chain is Phosphoglucosamine mutase (450 aa).

Catalysis depends on Ser-101, which acts as the Phosphoserine intermediate. The Mg(2+) site is built by Ser-101, Asp-240, Asp-242, and Asp-244. Residue Ser-101 is modified to Phosphoserine.

The protein belongs to the phosphohexose mutase family. The cofactor is Mg(2+). Activated by phosphorylation.

It catalyses the reaction alpha-D-glucosamine 1-phosphate = D-glucosamine 6-phosphate. Catalyzes the conversion of glucosamine-6-phosphate to glucosamine-1-phosphate. In Streptococcus sanguinis (strain SK36), this protein is Phosphoglucosamine mutase.